We begin with the raw amino-acid sequence, 900 residues long: Xylanolytic transcriptional activator xlnR (900 aa).

Polar residues predominate over residues S53–R71. The tract at residues S53 to A75 is disordered. Positions C98 to C124 form a DNA-binding region, zn(2)-C6 fungal-type. Disordered stretches follow at residues S137–G169, E520–E559, and E701–G722. Basic and acidic residues predominate over residues D531–S542. Residues K543 to V557 show a composition bias toward polar residues. The segment covering S712 to G722 has biased composition (low complexity).

The protein belongs to the xlnR/xlr1 family.

It localises to the nucleus. Functionally, transcriptional activator of the xylanolytic system. Involved in the regulation of extracellular cellulolytic and xylanolytic genes and in the regulation of the intracellular activities of D-xylose catabolic genes in the pentose catabolic pathway (PCP) in response to the presence of D-xylose. Binds to the DNA sequence 5'-GGNTAAA-3'. The polypeptide is Xylanolytic transcriptional activator xlnR (xlnR) (Emericella nidulans (strain FGSC A4 / ATCC 38163 / CBS 112.46 / NRRL 194 / M139) (Aspergillus nidulans)).